Reading from the N-terminus, the 381-residue chain is Probable serine/threonine-protein kinase PBL25 (381 aa).

A lipid anchor (S-palmitoyl cysteine) is attached at C3. Residues G16 to A41 are disordered. Residue T54 is modified to Phosphothreonine. The 278-residue stretch at F65–L342 folds into the Protein kinase domain. ATP-binding positions include I71–V79 and K94. Residue Y139 is modified to Phosphotyrosine. D192 functions as the Proton acceptor in the catalytic mechanism. Phosphoserine is present on residues S196 and S226. Residue T232 is modified to Phosphothreonine. Y240 is subject to Phosphotyrosine. Residues N347–M381 are disordered. Over residues H355–M381 the composition is skewed to polar residues.

Belongs to the protein kinase superfamily. Ser/Thr protein kinase family.

Its subcellular location is the cell membrane. The catalysed reaction is L-seryl-[protein] + ATP = O-phospho-L-seryl-[protein] + ADP + H(+). It catalyses the reaction L-threonyl-[protein] + ATP = O-phospho-L-threonyl-[protein] + ADP + H(+). May be involved in plant defense signaling. The polypeptide is Probable serine/threonine-protein kinase PBL25 (Arabidopsis thaliana (Mouse-ear cress)).